We begin with the raw amino-acid sequence, 317 residues long: Transaldolase (317 aa).

Lysine 132 functions as the Schiff-base intermediate with substrate in the catalytic mechanism.

This sequence belongs to the transaldolase family. Type 1 subfamily. Homodimer.

The protein localises to the cytoplasm. It catalyses the reaction D-sedoheptulose 7-phosphate + D-glyceraldehyde 3-phosphate = D-erythrose 4-phosphate + beta-D-fructose 6-phosphate. It participates in carbohydrate degradation; pentose phosphate pathway; D-glyceraldehyde 3-phosphate and beta-D-fructose 6-phosphate from D-ribose 5-phosphate and D-xylulose 5-phosphate (non-oxidative stage): step 2/3. Its function is as follows. Transaldolase is important for the balance of metabolites in the pentose-phosphate pathway. The chain is Transaldolase from Yersinia enterocolitica serotype O:8 / biotype 1B (strain NCTC 13174 / 8081).